The sequence spans 379 residues: Queuine tRNA-ribosyltransferase (379 aa).

Residue aspartate 94 is the Proton acceptor of the active site. Substrate is bound by residues 94–98, aspartate 148, glutamine 191, and glycine 218; that span reads DSGGF. The interval 249–255 is RNA binding; that stretch reads GVGSPDA. The Nucleophile role is filled by aspartate 268. An RNA binding; important for wobble base 34 recognition region spans residues 273 to 277; that stretch reads TRIAR. Residues cysteine 306, cysteine 308, cysteine 311, and histidine 337 each contribute to the Zn(2+) site.

This sequence belongs to the queuine tRNA-ribosyltransferase family. In terms of assembly, homodimer. Within each dimer, one monomer is responsible for RNA recognition and catalysis, while the other monomer binds to the replacement base PreQ1. The cofactor is Zn(2+).

The catalysed reaction is 7-aminomethyl-7-carbaguanine + guanosine(34) in tRNA = 7-aminomethyl-7-carbaguanosine(34) in tRNA + guanine. It participates in tRNA modification; tRNA-queuosine biosynthesis. Its function is as follows. Catalyzes the base-exchange of a guanine (G) residue with the queuine precursor 7-aminomethyl-7-deazaguanine (PreQ1) at position 34 (anticodon wobble position) in tRNAs with GU(N) anticodons (tRNA-Asp, -Asn, -His and -Tyr). Catalysis occurs through a double-displacement mechanism. The nucleophile active site attacks the C1' of nucleotide 34 to detach the guanine base from the RNA, forming a covalent enzyme-RNA intermediate. The proton acceptor active site deprotonates the incoming PreQ1, allowing a nucleophilic attack on the C1' of the ribose to form the product. After dissociation, two additional enzymatic reactions on the tRNA convert PreQ1 to queuine (Q), resulting in the hypermodified nucleoside queuosine (7-(((4,5-cis-dihydroxy-2-cyclopenten-1-yl)amino)methyl)-7-deazaguanosine). The polypeptide is Queuine tRNA-ribosyltransferase (Staphylococcus haemolyticus (strain JCSC1435)).